The sequence spans 407 residues: Phosphopentomutase (407 aa).

6 residues coordinate Mn(2+): Asp10, Asp306, His311, Asp347, His348, and His359.

This sequence belongs to the phosphopentomutase family. Requires Mn(2+) as cofactor.

The protein localises to the cytoplasm. It catalyses the reaction 2-deoxy-alpha-D-ribose 1-phosphate = 2-deoxy-D-ribose 5-phosphate. The enzyme catalyses alpha-D-ribose 1-phosphate = D-ribose 5-phosphate. It participates in carbohydrate degradation; 2-deoxy-D-ribose 1-phosphate degradation; D-glyceraldehyde 3-phosphate and acetaldehyde from 2-deoxy-alpha-D-ribose 1-phosphate: step 1/2. Isomerase that catalyzes the conversion of deoxy-ribose 1-phosphate (dRib-1-P) and ribose 1-phosphate (Rib-1-P) to deoxy-ribose 5-phosphate (dRib-5-P) and ribose 5-phosphate (Rib-5-P), respectively. The protein is Phosphopentomutase of Escherichia coli O127:H6 (strain E2348/69 / EPEC).